A 930-amino-acid polypeptide reads, in one-letter code: Short transient receptor potential channel 6 (930 aa).

The interval 1-27 (MSQSPRFVTRRGGSLKAAPGAGTRRNE) is disordered. The Cytoplasmic portion of the chain corresponds to 1-437 (MSQSPRFVTR…CSKMGKILRG (437 aa)). ANK repeat units follow at residues 96-125 (IEEE…SLNV), 131-160 (MGQN…LSRV), 162-188 (DALL…FAEG), and 217-246 (HDVT…RIER). Residues 438–458 (PFMKFVAHAASFTIFLGLLVM) traverse the membrane as a helical segment. Residues 459–486 (NAADRFEGTKLLPNETSTDNARQLFRMK) lie on the Extracellular side of the membrane. Residues 487–507 (TSCFSWMEMLIISWVIGMIWA) form a helical membrane-spanning segment. The Cytoplasmic segment spans residues 508–520 (ECKEIWTQGPKEY). Residues 521-541 (LFELWNMLDFGMLAIFAASFI) traverse the membrane as a helical segment. The Extracellular segment spans residues 542–591 (ARFMAFWHASKAQSIIDANDTLKDLTKVTLGDNVKYYNLARIKWDPTDPQ). An N-linked (GlcNAc...) asparagine glycan is attached at Asn560. A helical membrane pass occupies residues 592-612 (IISEGLYAIAVVLSFSRIAYI). The Cytoplasmic portion of the chain corresponds to 613–635 (LPANESFGPLQISLGRTVKDIFK). Residues 636-656 (FMVIFIMVFVAFMIGMFNLYS) traverse the membrane as a helical segment. The Extracellular portion of the chain corresponds to 657–705 (YYIGAKQNEAFTTVEESFKTLFWAIFGLSEVKSVVINYNHKFIENIGYV). The helical transmembrane segment at 706 to 726 (LYGVYNVTMVIVLLNMLIAMI) threads the bilayer. The Cytoplasmic segment spans residues 727-930 (NSSFQEIEDD…LEPKLEESRR (204 aa)). Ser814 carries the post-translational modification Phosphoserine.

Belongs to the transient receptor (TC 1.A.4) family. STrpC subfamily. TRPC6 sub-subfamily. In terms of assembly, homodimer; forms channel complex. Interacts with MX1 and RNF24. Post-translationally, phosphorylated by FYN, leading to an increase of TRPC6 channel activity. N-glycosylated. In terms of tissue distribution, lung and brain.

It is found in the cell membrane. It catalyses the reaction Ca(2+)(in) = Ca(2+)(out). Functionally, forms a receptor-activated non-selective calcium permeant cation channel. Probably is operated by a phosphatidylinositol second messenger system activated by receptor tyrosine kinases or G-protein coupled receptors. Activated by diacylglycerol (DAG) in a membrane-delimited fashion, independently of protein kinase C. Seems not to be activated by intracellular calcium store depletion. The polypeptide is Short transient receptor potential channel 6 (Mus musculus (Mouse)).